Consider the following 187-residue polypeptide: Ribosome-recycling factor (187 aa).

This sequence belongs to the RRF family.

It is found in the cytoplasm. Responsible for the release of ribosomes from messenger RNA at the termination of protein biosynthesis. May increase the efficiency of translation by recycling ribosomes from one round of translation to another. The chain is Ribosome-recycling factor from Ligilactobacillus salivarius (strain UCC118) (Lactobacillus salivarius).